Reading from the N-terminus, the 145-residue chain is Large ribosomal subunit protein uL11 (145 aa).

The protein belongs to the universal ribosomal protein uL11 family. As to quaternary structure, part of the ribosomal stalk of the 50S ribosomal subunit. Interacts with L10 and the large rRNA to form the base of the stalk. L10 forms an elongated spine to which L12 dimers bind in a sequential fashion forming a multimeric L10(L12)X complex. Post-translationally, one or more lysine residues are methylated.

In terms of biological role, forms part of the ribosomal stalk which helps the ribosome interact with GTP-bound translation factors. The polypeptide is Large ribosomal subunit protein uL11 (Rickettsia typhi (strain ATCC VR-144 / Wilmington)).